The chain runs to 218 residues: Glutathione S-transferase class-mu 26 kDa isozyme 51 (218 aa).

The 82-residue stretch at 2–83 (PAKLGYWKIR…YIADKHGMLG (82 aa)) folds into the GST N-terminal domain. Glutathione-binding positions include 7 to 8 (YW), 41 to 45 (WFGDK), 54 to 55 (NL), and 67 to 68 (QS). The GST C-terminal domain occupies 85–203 (TPEERARISM…ESEKFIKWPL (119 aa)). Tyr111 lines the substrate pocket.

This sequence belongs to the GST superfamily. Mu family. As to quaternary structure, homodimer.

The protein resides in the cytoplasm. It catalyses the reaction RX + glutathione = an S-substituted glutathione + a halide anion + H(+). Conjugation of reduced glutathione to a wide number of exogenous and endogenous hydrophobic electrophiles. Functionally, GST isoenzymes appear to play a central role in the parasite detoxification system. Other functions are also suspected including a role in increasing the solubility of haematin in the parasite gut. This chain is Glutathione S-transferase class-mu 26 kDa isozyme 51, found in Fasciola hepatica (Liver fluke).